A 119-amino-acid polypeptide reads, in one-letter code: Cysteine-rich DPF motif domain-containing protein 1 (119 aa).

It belongs to the CDPF1 family.

The protein is Cysteine-rich DPF motif domain-containing protein 1 (Cdpf1) of Mus musculus (Mouse).